Here is a 234-residue protein sequence, read N- to C-terminus: Small ribosomal subunit protein uS10m (234 aa).

A mitochondrion-targeting transit peptide spans 1–23 (MLRIGYRGFSTRSRVFKLSPQEY).

Belongs to the universal ribosomal protein uS10 family. As to quaternary structure, component of the mitochondrial small ribosomal subunit (mt-SSU).

It localises to the mitochondrion. In terms of biological role, component of the mitochondrial ribosome (mitoribosome), a dedicated translation machinery responsible for the synthesis of mitochondrial genome-encoded proteins, including at least some of the essential transmembrane subunits of the mitochondrial respiratory chain. The mitoribosomes are attached to the mitochondrial inner membrane and translation products are cotranslationally integrated into the membrane. This chain is Small ribosomal subunit protein uS10m (RSM10), found in Candida albicans (strain SC5314 / ATCC MYA-2876) (Yeast).